We begin with the raw amino-acid sequence, 345 residues long: S-adenosylmethionine:tRNA ribosyltransferase-isomerase (345 aa).

The protein belongs to the QueA family. As to quaternary structure, monomer.

The protein localises to the cytoplasm. It catalyses the reaction 7-aminomethyl-7-carbaguanosine(34) in tRNA + S-adenosyl-L-methionine = epoxyqueuosine(34) in tRNA + adenine + L-methionine + 2 H(+). It participates in tRNA modification; tRNA-queuosine biosynthesis. Functionally, transfers and isomerizes the ribose moiety from AdoMet to the 7-aminomethyl group of 7-deazaguanine (preQ1-tRNA) to give epoxyqueuosine (oQ-tRNA). The protein is S-adenosylmethionine:tRNA ribosyltransferase-isomerase of Helicobacter pylori (strain ATCC 700392 / 26695) (Campylobacter pylori).